Consider the following 452-residue polypeptide: Bifunctional protein GlmU (452 aa).

The tract at residues 1-225 (MDVVILAAGL…ENELIGINTR (225 aa)) is pyrophosphorylase. UDP-N-acetyl-alpha-D-glucosamine is bound by residues 6-9 (LAAG), K20, Q71, and 76-77 (GT). A Mg(2+)-binding site is contributed by D99. Residues G136, E151, N166, and N223 each contribute to the UDP-N-acetyl-alpha-D-glucosamine site. Residue N223 participates in Mg(2+) binding. Positions 226 to 246 (AELSLAMRYLRDRIVKGWMEK) are linker. Positions 247-452 (GITFYDPALV…LGWAKKKRKQ (206 aa)) are N-acetyltransferase. Residues R329 and K347 each coordinate UDP-N-acetyl-alpha-D-glucosamine. The active-site Proton acceptor is the H359. Residues Y362 and N373 each coordinate UDP-N-acetyl-alpha-D-glucosamine. Acetyl-CoA contacts are provided by residues A376, 382-383 (NY), S401, A419, and R436.

The protein in the N-terminal section; belongs to the N-acetylglucosamine-1-phosphate uridyltransferase family. It in the C-terminal section; belongs to the transferase hexapeptide repeat family. As to quaternary structure, homotrimer. Mg(2+) is required as a cofactor.

It localises to the cytoplasm. The enzyme catalyses alpha-D-glucosamine 1-phosphate + acetyl-CoA = N-acetyl-alpha-D-glucosamine 1-phosphate + CoA + H(+). The catalysed reaction is N-acetyl-alpha-D-glucosamine 1-phosphate + UTP + H(+) = UDP-N-acetyl-alpha-D-glucosamine + diphosphate. Its pathway is nucleotide-sugar biosynthesis; UDP-N-acetyl-alpha-D-glucosamine biosynthesis; N-acetyl-alpha-D-glucosamine 1-phosphate from alpha-D-glucosamine 6-phosphate (route II): step 2/2. It participates in nucleotide-sugar biosynthesis; UDP-N-acetyl-alpha-D-glucosamine biosynthesis; UDP-N-acetyl-alpha-D-glucosamine from N-acetyl-alpha-D-glucosamine 1-phosphate: step 1/1. The protein operates within bacterial outer membrane biogenesis; LPS lipid A biosynthesis. Functionally, catalyzes the last two sequential reactions in the de novo biosynthetic pathway for UDP-N-acetylglucosamine (UDP-GlcNAc). The C-terminal domain catalyzes the transfer of acetyl group from acetyl coenzyme A to glucosamine-1-phosphate (GlcN-1-P) to produce N-acetylglucosamine-1-phosphate (GlcNAc-1-P), which is converted into UDP-GlcNAc by the transfer of uridine 5-monophosphate (from uridine 5-triphosphate), a reaction catalyzed by the N-terminal domain. In Thermodesulfovibrio yellowstonii (strain ATCC 51303 / DSM 11347 / YP87), this protein is Bifunctional protein GlmU.